The following is a 113-amino-acid chain: UPF0122 protein Lreu_1156 (113 aa).

This sequence belongs to the UPF0122 family.

Its function is as follows. Might take part in the signal recognition particle (SRP) pathway. This is inferred from the conservation of its genetic proximity to ftsY/ffh. May be a regulatory protein. This is UPF0122 protein Lreu_1156 from Limosilactobacillus reuteri (strain DSM 20016) (Lactobacillus reuteri).